We begin with the raw amino-acid sequence, 739 residues long: Eukaryotic translation initiation factor 3 subunit B (739 aa).

The segment at 1–98 is sufficient for interaction with HCR1 and TIF32; it reads MSINEEDYLQ…LFIQFKSTES (98 aa). The sufficient for interaction with PIC8 stretch occupies residues 1 to 224; the sequence is MSINEEDYLQ…GIQSWGGANF (224 aa). The 88-residue stretch at 37-124 folds into the RRM domain; it reads NYIIVDGAPI…HRLLVNKLSD (88 aa). 7 WD repeats span residues 190–229, 231–293, 301–339, 343–385, 453–502, 537–579, and 592–630; these read PRKG…SIKR, FHQQ…RTFA, QKEM…QLLD, VKVD…QTAR, ELKD…KGGV, IENK…ETNK, and DKFS…YEFT.

The protein belongs to the eIF-3 subunit B family. In terms of assembly, component of the eukaryotic translation initiation factor 3 (eIF-3) complex.

It localises to the cytoplasm. In terms of biological role, RNA-binding component of the eukaryotic translation initiation factor 3 (eIF-3) complex, which is involved in protein synthesis of a specialized repertoire of mRNAs and, together with other initiation factors, stimulates binding of mRNA and methionyl-tRNAi to the 40S ribosome. The eIF-3 complex specifically targets and initiates translation of a subset of mRNAs involved in cell proliferation. The protein is Eukaryotic translation initiation factor 3 subunit B of Candida albicans (strain SC5314 / ATCC MYA-2876) (Yeast).